Reading from the N-terminus, the 294-residue chain is tRNA dimethylallyltransferase (294 aa).

10 to 17 (GPTAVGKT) is an ATP binding site. Residue 12–17 (TAVGKT) coordinates substrate. Positions 35–38 (DSQQ) are interaction with substrate tRNA.

Belongs to the IPP transferase family. Monomer. Mg(2+) serves as cofactor.

The catalysed reaction is adenosine(37) in tRNA + dimethylallyl diphosphate = N(6)-dimethylallyladenosine(37) in tRNA + diphosphate. Its function is as follows. Catalyzes the transfer of a dimethylallyl group onto the adenine at position 37 in tRNAs that read codons beginning with uridine, leading to the formation of N6-(dimethylallyl)adenosine (i(6)A). The polypeptide is tRNA dimethylallyltransferase (Streptococcus mutans serotype c (strain ATCC 700610 / UA159)).